The primary structure comprises 392 residues: Large ribosomal subunit protein uL3 (392 aa).

The protein belongs to the universal ribosomal protein uL3 family.

The protein resides in the cytoplasm. The L3 protein is a component of the large subunit of cytoplasmic ribosomes. This is Large ribosomal subunit protein uL3 (rpl3) from Aspergillus fumigatus (strain ATCC MYA-4609 / CBS 101355 / FGSC A1100 / Af293) (Neosartorya fumigata).